A 126-amino-acid polypeptide reads, in one-letter code: Cyclin-dependent kinase 2-associated protein 2 (126 aa).

Residues 1–48 (MSYKPIAPAPSSTPGSSTPGPGTPVPTGSVPSPSGSVPGAGAPFRPLF) form a disordered region. Residues 9 to 43 (APSSTPGSSTPGPGTPVPTGSVPSPSGSVPGAGAP) show a composition bias toward low complexity. The interaction with CDK2 stretch occupies residues 64–106 (PPGAQGSQSTYTDLLSVIEEMGKEIRPTYAGSKSAMERLKRGI).

The protein belongs to the CDK2AP family. As to quaternary structure, component of the nucleosome remodeling and deacetylase (NuRD) repressor complex, composed of core proteins MTA1, MTA2, MTA3, RBBP4, RBBP7, HDAC1, HDAC2, MBD2, MBD3, and peripherally associated proteins CDK2AP1, CDK2AP2, GATAD2A, GATAD2B, CHD3, CHD4 and CHD5. The exact stoichiometry of the NuRD complex is unknown, and some subunits such as MBD2 and MBD3, GATAD2A and GATAD2B, and CHD3, CHD4 and CHD5 define mutually exclusive NuRD complexes. Interacts with CDK2AP1. Interacts with CDK2. Interacts with MAPK1. Phosphorylated by MAPK1 and CDK2. Ubiquitous.

The protein localises to the cytoplasm. It localises to the nucleus. In terms of biological role, acts as a component of the histone deacetylase NuRD complex which participates in the remodeling of chromatin. Inhibits cell cycle G1/S phase transition by repressing CDK2 expression and activation; represses CDK2 activation by inhibiting its interaction with cyclin E and A. Plays a role in regulating the self-renewal of embryonic stem cells (ESCs) and in maintaining cell survival during terminal differentiation of ESCs. Regulates microtubule organization of metaphase II oocytes. The chain is Cyclin-dependent kinase 2-associated protein 2 (CDK2AP2) from Homo sapiens (Human).